The sequence spans 208 residues: dITP/XTP pyrophosphatase (208 aa).

S16–K21 serves as a coordination point for substrate. D79 functions as the Proton acceptor in the catalytic mechanism. D79 contacts Mg(2+). Substrate is bound by residues S80, F166–D169, K189, and H194–R195.

Belongs to the HAM1 NTPase family. As to quaternary structure, homodimer. The cofactor is Mg(2+).

It carries out the reaction XTP + H2O = XMP + diphosphate + H(+). It catalyses the reaction dITP + H2O = dIMP + diphosphate + H(+). The enzyme catalyses ITP + H2O = IMP + diphosphate + H(+). In terms of biological role, pyrophosphatase that catalyzes the hydrolysis of nucleoside triphosphates to their monophosphate derivatives, with a high preference for the non-canonical purine nucleotides XTP (xanthosine triphosphate), dITP (deoxyinosine triphosphate) and ITP. Seems to function as a house-cleaning enzyme that removes non-canonical purine nucleotides from the nucleotide pool, thus preventing their incorporation into DNA/RNA and avoiding chromosomal lesions. In Acinetobacter baumannii (strain ACICU), this protein is dITP/XTP pyrophosphatase.